Reading from the N-terminus, the 198-residue chain is Neutrophil gelatinase-associated lipocalin (198 aa).

The N-terminal stretch at 1–20 is a signal peptide; that stretch reads MPLGLLWLGLALLGALHAQA. At Q21 the chain carries Pyrrolidone carboxylic acid. 72-74 lines the a carboxymycobactin pocket; it reads YAT. N85 is a glycosylation site (N-linked (GlcNAc...) asparagine). Residues C96 and C195 are joined by a disulfide bond. Y126 contributes to the enterobactin binding site. 3 residues coordinate a carboxymycobactin: K145, K154, and Y158. An enterobactin-binding site is contributed by K154.

It belongs to the calycin superfamily. Lipocalin family. As to quaternary structure, monomer. Homodimer; disulfide-linked. Heterodimer; disulfide-linked with MMP9. In terms of tissue distribution, detected in neutrophils (at protein level). Expressed in bone marrow and in tissues that are prone to exposure to microorganism. High expression is found in bone marrow as well as in uterus, prostate, salivary gland, stomach, appendix, colon, trachea and lung. Expressed in the medullary tubules of the kidney. Not found in the small intestine or peripheral blood leukocytes.

It is found in the secreted. The protein resides in the cytoplasmic granule lumen. Its subcellular location is the cytoplasmic vesicle lumen. In terms of biological role, iron-trafficking protein involved in multiple processes such as apoptosis, innate immunity and renal development. Binds iron through association with 2,3-dihydroxybenzoic acid (2,3-DHBA), a siderophore that shares structural similarities with bacterial enterobactin, and delivers or removes iron from the cell, depending on the context. Iron-bound form (holo-24p3) is internalized following binding to the SLC22A17 (24p3R) receptor, leading to release of iron and subsequent increase of intracellular iron concentration. In contrast, association of the iron-free form (apo-24p3) with the SLC22A17 (24p3R) receptor is followed by association with an intracellular siderophore, iron chelation and iron transfer to the extracellular medium, thereby reducing intracellular iron concentration. Involved in apoptosis due to interleukin-3 (IL3) deprivation: iron-loaded form increases intracellular iron concentration without promoting apoptosis, while iron-free form decreases intracellular iron levels, inducing expression of the proapoptotic protein BCL2L11/BIM, resulting in apoptosis. Involved in innate immunity; limits bacterial proliferation by sequestering iron bound to microbial siderophores, such as enterobactin. Can also bind siderophores from M.tuberculosis. The polypeptide is Neutrophil gelatinase-associated lipocalin (LCN2) (Homo sapiens (Human)).